The primary structure comprises 298 residues: GTP cyclohydrolase FolE2 (298 aa).

This sequence belongs to the GTP cyclohydrolase IV family.

It carries out the reaction GTP + H2O = 7,8-dihydroneopterin 3'-triphosphate + formate + H(+). It functions in the pathway cofactor biosynthesis; 7,8-dihydroneopterin triphosphate biosynthesis; 7,8-dihydroneopterin triphosphate from GTP: step 1/1. Functionally, converts GTP to 7,8-dihydroneopterin triphosphate. The chain is GTP cyclohydrolase FolE2 from Xylella fastidiosa (strain M23).